Reading from the N-terminus, the 207-residue chain is Pyridoxine/pyridoxamine 5'-phosphate oxidase (207 aa).

FMN-binding positions include 53–58 (RMVLLK), 68–69 (YT), K75, and Q97. K58 lines the substrate pocket. Substrate is bound by residues Y115, R119, and S123. FMN is bound by residues 132 to 133 (QS) and W177. 183–185 (RLH) serves as a coordination point for substrate. An FMN-binding site is contributed by R187.

This sequence belongs to the pyridoxamine 5'-phosphate oxidase family. As to quaternary structure, homodimer. FMN serves as cofactor.

The enzyme catalyses pyridoxamine 5'-phosphate + O2 + H2O = pyridoxal 5'-phosphate + H2O2 + NH4(+). It catalyses the reaction pyridoxine 5'-phosphate + O2 = pyridoxal 5'-phosphate + H2O2. It functions in the pathway cofactor metabolism; pyridoxal 5'-phosphate salvage; pyridoxal 5'-phosphate from pyridoxamine 5'-phosphate: step 1/1. Its pathway is cofactor metabolism; pyridoxal 5'-phosphate salvage; pyridoxal 5'-phosphate from pyridoxine 5'-phosphate: step 1/1. Its function is as follows. Catalyzes the oxidation of either pyridoxine 5'-phosphate (PNP) or pyridoxamine 5'-phosphate (PMP) into pyridoxal 5'-phosphate (PLP). In Bartonella henselae (strain ATCC 49882 / DSM 28221 / CCUG 30454 / Houston 1) (Rochalimaea henselae), this protein is Pyridoxine/pyridoxamine 5'-phosphate oxidase.